The sequence spans 237 residues: UPF0688 protein C1orf174 homolog (237 aa).

The interval 1 to 187 (MRSRKLAGGV…LLDDDSNQPM (187 aa)) is disordered. The span at 11 to 28 (RSSARLRARSCSAASASA) shows a compositional bias: low complexity. The segment covering 29–47 (QDTHVTTSAQTACQTPSSH) has biased composition (polar residues). Positions 48 to 76 (KATDRRTSKKFKYDKGHIVKSELQKHRSD) are enriched in basic and acidic residues. A Phosphoserine modification is found at Ser-183.

This sequence belongs to the UPF0688 family.

The protein resides in the nucleus. The protein is UPF0688 protein C1orf174 homolog of Bos taurus (Bovine).